We begin with the raw amino-acid sequence, 348 residues long: Ion-translocating oxidoreductase complex subunit D (348 aa).

The next 3 helical transmembrane spans lie at 20 to 39, 67 to 87, and 124 to 144; these read VMRL…CYLF, YVVS…LIAV, and AMVG…NWMA. T187 is subject to FMN phosphoryl threonine. 4 helical membrane passes run 221–241, 244–264, 266–286, and 300–320; these read WINL…LIPW, PVAM…LAPA, FAMP…FFII, and LVFG…GGYP.

The protein belongs to the NqrB/RnfD family. The complex is composed of six subunits: RnfA, RnfB, RnfC, RnfD, RnfE and RnfG. It depends on FMN as a cofactor.

The protein localises to the cell inner membrane. In terms of biological role, part of a membrane-bound complex that couples electron transfer with translocation of ions across the membrane. The chain is Ion-translocating oxidoreductase complex subunit D from Tolumonas auensis (strain DSM 9187 / NBRC 110442 / TA 4).